The sequence spans 29 residues: Cysteine-rich venom protein 25-A (29 aa).

It belongs to the CRISP family. In terms of processing, contains 8 disulfide bonds. Expressed by the venom gland.

It is found in the secreted. In Naja haje haje (Egyptian cobra), this protein is Cysteine-rich venom protein 25-A.